A 154-amino-acid polypeptide reads, in one-letter code: Fucose mutarotase (154 aa).

Catalysis depends on H24, which acts as the Proton donor. D32 is a binding site for substrate. The active site involves D69. Substrate is bound by residues M79, Y120, Y138, and N140. The active site involves Y120.

This sequence belongs to the RbsD / FucU family. In terms of assembly, mainly homodimer, but also exists as homotetramer, homooctamer, and homodecamer. The homodimeric form seems catalytically inactive.

The enzyme catalyses alpha-L-fucose = beta-L-fucose. Its pathway is carbohydrate metabolism; L-fucose metabolism. Its function is as follows. Involved in the interconversion between alpha- and beta-L-fucoses. L-Fucose (6-deoxy-L-galactose) exists as alpha-L-fucose (29.5%) and beta-L-fucose (70.5%), the beta-form is metabolized through the salvage pathway. GDP-L-fucose formed either by the de novo or salvage pathways is transported into the endoplasmic reticulum, where it serves as a substrate for N- and O-glycosylations by fucosyltransferases. Fucosylated structures expressed on cell surfaces or secreted in biological fluids are believed to play a critical role in cell-cell adhesion and recognition processes. This Homo sapiens (Human) protein is Fucose mutarotase (FUOM).